Reading from the N-terminus, the 232-residue chain is Nucleolar protein 16 (232 aa).

Residues 1-14 (MGRELQKRKKRSSR) show a composition bias toward basic residues. Disordered stretches follow at residues 1–20 (MGRE…VQTH) and 113–161 (RSDN…QSSR). The span at 132 to 154 (EEPKPKNPTHDIEWHGISDDRQE) shows a compositional bias: basic and acidic residues.

This sequence belongs to the NOP16 family. In terms of assembly, component of the pre-66S ribosomal particle.

Its subcellular location is the nucleus. The protein localises to the nucleolus. Its function is as follows. Involved in the biogenesis of the 60S ribosomal subunit. The sequence is that of Nucleolar protein 16 (nop-16) from Neurospora crassa (strain ATCC 24698 / 74-OR23-1A / CBS 708.71 / DSM 1257 / FGSC 987).